Reading from the N-terminus, the 253-residue chain is 5'-nucleotidase SurE (253 aa).

A divalent metal cation-binding residues include D8, D9, S39, and N95.

It belongs to the SurE nucleotidase family. The cofactor is a divalent metal cation.

The protein localises to the cytoplasm. The catalysed reaction is a ribonucleoside 5'-phosphate + H2O = a ribonucleoside + phosphate. Nucleotidase that shows phosphatase activity on nucleoside 5'-monophosphates. In Chloroflexus aggregans (strain MD-66 / DSM 9485), this protein is 5'-nucleotidase SurE.